The chain runs to 892 residues: MAQYDIRKQYLDFFASKSHKVYDSMPLVPDDASLLFTNAGMVQFKDIFTGKIPIPAPPRATSSQLCIRAGGKHNDLENVGYTARHHTLFEMLGNFSFGDYFKKEAIAYAWEFVTQVLGFSKDVLYVTIHESDDEAYELWCEHIEPSRIKRMGDKDNFWQMGDSGPCGPCSEIYVDQGEKYFQSDEDYFGGEGDRFLEIWNLVFMQFEQKGGVRTLLPKPSIDTGMGLERVIALKEGKINNFDTSLFAPLMQCLQKLTNKTYFGDDEIFDRLDLQEAEMIKIKNIQASFRVIADHARSVAFLLAQGVNFDKEGRGYVLRRILRRAVRHGYLLGLKKPFLWQVVEVVCESMGVHYSYLQERKRAIKEQCKNEEERFFETIESGMTLFSTELEKLQSAVQTQKQEILFSGEVAFKLYDTYGFPLDLTQDMLRERHIQVDMQAFEQCMNEQKSRSKASWKGSGDALKEGDFNALLSKFGENKFVGYESNKETCKIKALLDSQFKMVDTLSPSSQGWVMLDKTPFYPESGGPVGDKGALYSTNRILQSAQAQKFAQVLDTQKFFGLNLSQIEALSALKVGQEVFAEVDSIRFEIAKHHSATHLLHLALRTILGSHIAQAGSLVQPHRLRFDFSHPKALTNEEITHIENLVNEQILQSNAQLCENMDMQQAKAKGAMALFGEKYGERVRVVSFGDSIELCGGIHVNNTAEIGSFYIVKESGVSSGVRRIEAVCGNAAYHYGKNALLELSRARESLKAQDVLQGIEKIKMQLNEAKEKANKAKQSVKSLDYEEINGVRLIVLKLDSVSANEAKEIIDRSKNENESVAILLLSESNNKISIVAGVKNAPLKAGAWVKQVAQELGGNGGGRDDFATAGGKDIDKISQALNLAKDIATKALQ.

4 residues coordinate Zn(2+): His593, His597, Cys694, and His698.

Belongs to the class-II aminoacyl-tRNA synthetase family. Zn(2+) serves as cofactor.

The protein resides in the cytoplasm. The catalysed reaction is tRNA(Ala) + L-alanine + ATP = L-alanyl-tRNA(Ala) + AMP + diphosphate. Functionally, catalyzes the attachment of alanine to tRNA(Ala) in a two-step reaction: alanine is first activated by ATP to form Ala-AMP and then transferred to the acceptor end of tRNA(Ala). Also edits incorrectly charged Ser-tRNA(Ala) and Gly-tRNA(Ala) via its editing domain. This is Alanine--tRNA ligase from Helicobacter hepaticus (strain ATCC 51449 / 3B1).